Here is a 197-residue protein sequence, read N- to C-terminus: Phosphoheptose isomerase (197 aa).

The SIS domain occupies 36–197; that stretch reads MTASLMNNGK…IDCLLLGVEE (162 aa). 51 to 53 lines the substrate pocket; it reads NGG. Zn(2+) is bound by residues H60 and E64. Substrate is bound by residues E64, 93–94, 119–121, S124, and Q174; these read ND and STS. Q174 and H182 together coordinate Zn(2+).

This sequence belongs to the SIS family. GmhA subfamily. Homotetramer. The cofactor is Zn(2+).

It localises to the cytoplasm. It carries out the reaction 2 D-sedoheptulose 7-phosphate = D-glycero-alpha-D-manno-heptose 7-phosphate + D-glycero-beta-D-manno-heptose 7-phosphate. The protein operates within carbohydrate biosynthesis; D-glycero-D-manno-heptose 7-phosphate biosynthesis; D-glycero-alpha-D-manno-heptose 7-phosphate and D-glycero-beta-D-manno-heptose 7-phosphate from sedoheptulose 7-phosphate: step 1/1. Functionally, catalyzes the isomerization of sedoheptulose 7-phosphate in D-glycero-D-manno-heptose 7-phosphate. The polypeptide is Phosphoheptose isomerase (Azoarcus sp. (strain BH72)).